The primary structure comprises 173 residues: Ribosome maturation factor RimM (173 aa).

One can recognise a PRC barrel domain in the interval 95–169; the sequence is DPDEFYDHQL…VIEIDPPEGL (75 aa).

It belongs to the RimM family. As to quaternary structure, binds ribosomal protein uS19.

It is found in the cytoplasm. An accessory protein needed during the final step in the assembly of 30S ribosomal subunit, possibly for assembly of the head region. Essential for efficient processing of 16S rRNA. May be needed both before and after RbfA during the maturation of 16S rRNA. It has affinity for free ribosomal 30S subunits but not for 70S ribosomes. The polypeptide is Ribosome maturation factor RimM (Mycobacteroides abscessus (strain ATCC 19977 / DSM 44196 / CCUG 20993 / CIP 104536 / JCM 13569 / NCTC 13031 / TMC 1543 / L948) (Mycobacterium abscessus)).